A 206-amino-acid polypeptide reads, in one-letter code: Small ribosomal subunit protein uS4 (206 aa).

Residues 27–47 (PSESKCNMNAAPGQHGGRRGR) are disordered. The S4 RNA-binding domain maps to 96–158 (QRLDNVVYRM…SRKQIRIQSA (63 aa)).

Belongs to the universal ribosomal protein uS4 family. Part of the 30S ribosomal subunit. Contacts protein S5. The interaction surface between S4 and S5 is involved in control of translational fidelity.

Its function is as follows. One of the primary rRNA binding proteins, it binds directly to 16S rRNA where it nucleates assembly of the body of the 30S subunit. With S5 and S12 plays an important role in translational accuracy. This Dichelobacter nodosus (strain VCS1703A) protein is Small ribosomal subunit protein uS4.